Consider the following 278-residue polypeptide: Shikimate dehydrogenase (NADP(+)) (278 aa).

Shikimate-binding positions include 19–21 (SFS) and Thr-66. Lys-70 serves as the catalytic Proton acceptor. Residues Asn-91 and Asp-106 each coordinate shikimate. Residues 130–134 (GSGGA) and Leu-222 contribute to the NADP(+) site. Shikimate is bound at residue Tyr-224. Gly-245 contributes to the NADP(+) binding site.

Belongs to the shikimate dehydrogenase family. In terms of assembly, homodimer.

The catalysed reaction is shikimate + NADP(+) = 3-dehydroshikimate + NADPH + H(+). It functions in the pathway metabolic intermediate biosynthesis; chorismate biosynthesis; chorismate from D-erythrose 4-phosphate and phosphoenolpyruvate: step 4/7. In terms of biological role, involved in the biosynthesis of the chorismate, which leads to the biosynthesis of aromatic amino acids. Catalyzes the reversible NADPH linked reduction of 3-dehydroshikimate (DHSA) to yield shikimate (SA). The protein is Shikimate dehydrogenase (NADP(+)) of Methanococcus maripaludis (strain DSM 14266 / JCM 13030 / NBRC 101832 / S2 / LL).